Here is a 141-residue protein sequence, read N- to C-terminus: Period circadian protein (141 aa).

Residues 1 to 141 (EGSGGSGSSG…VTLTESLLNK (141 aa)) are disordered. The segment covering 11–23 (HFTTGSNVHMSSV) has biased composition (polar residues). A compositionally biased stretch (gly residues) spans 29 to 68 (GGTGGTGTGTGTGTGTGTGTGTGTGTGTGTGTGTGTGTGT). 19 consecutive repeat copies span residues 30 to 31 (GT), 33 to 34 (GT), 35 to 36 (GT), 37 to 38 (GT), 39 to 40 (GT), 41 to 42 (GT), 43 to 44 (GT), 45 to 46 (GT), 47 to 48 (GT), 49 to 50 (GT), 51 to 52 (GT), 53 to 54 (GT), 55 to 56 (GT), 57 to 58 (GT), 59 to 60 (GT), 61 to 62 (GT), 63 to 64 (GT), 65 to 66 (GT), and 67 to 68 (GT). Residues 30-94 (GTGGTGTGTG…ANGTGTGKGT (65 aa)) are 32 X 2 AA approximate tandem repeats of G-T. The stretch at 69-70 (AS) is one 20; approximate repeat. Positions 69–85 (ASGTATGTASGTATGTA) are enriched in low complexity. Repeat unit 21 spans residues 71-72 (GT). The stretch at 73–74 (AT) is one 22; approximate repeat. Repeat 23 spans residues 75 to 76 (GT). A 24; approximate repeat occupies 77–78 (AS). Copy 25 of the repeat occupies 79–80 (GT). Residues 81–82 (AT) form a 26; approximate repeat. Residues 83-84 (GT) form repeat 27. The 28; approximate repeat unit spans residues 85 to 86 (AN). 2 tandem repeats follow at residues 87-88 (GT) and 89-90 (GT). Residues 91 to 92 (GK) form a 31; approximate repeat. Repeat unit 32 spans residues 93 to 94 (GT). Residues 101-113 (SGSGSGTGTGTGT) are compositionally biased toward gly residues. Residues 114–129 (GTTTTTTTGNNSSSST) show a composition bias toward low complexity. The span at 130–141 (PPVTLTESLLNK) shows a compositional bias: polar residues.

As to quaternary structure, forms a heterodimer with timeless (TIM); the complex then translocates into the nucleus. Phosphorylated with a circadian rhythmicity, probably by the double-time protein (dbt). Phosphorylation could be implicated in the stability of per monomer and in the formation of heterodimer per-tim.

It localises to the nucleus. The protein localises to the cytoplasm. The protein resides in the perinuclear region. Essential for biological clock functions. Determines the period length of circadian and ultradian rhythms; an increase in PER dosage leads to shortened circadian rhythms and a decrease leads to lengthened circadian rhythms. Essential for the circadian rhythmicity of locomotor activity, eclosion behavior, and for the rhythmic component of the male courtship song that originates in the thoracic nervous system. The biological cycle depends on the rhythmic formation and nuclear localization of the TIM-PER complex. Light induces the degradation of TIM, which promotes elimination of PER. Nuclear activity of the heterodimer coordinatively regulates PER and TIM transcription through a negative feedback loop. Behaves as a negative element in circadian transcriptional loop. Does not appear to bind DNA, suggesting indirect transcriptional inhibition. This Drosophila serrata (Fruit fly) protein is Period circadian protein (per).